The primary structure comprises 313 residues: MLSTAAEEDPEGGSRETNNGGETTPDMQWRSWIIPIVVIANVVVFVVVMYYNDCPHKSHRCLAKFLGRFSFESFKSNPLLGPSSSTLEKMGALAWGKIVHKRQVWRLLTCMWLHAGVIHLLANMCCVAYIGVRLEQQFGFVRVGTIYLVSGFCGSILSCLFLEDAISVGASSALFGLLGAMLSELLINWTTYDNKGVAIVMLLVIVGVNLGLGTLPPVDNFAHIGGFFGGFLLGFLLLIHPQFEWEENQVSLMPGTIVKPKYNTCQLVLCIVASIVFVAGFTSGLVILFRGDSLNRYCKWCHKLSYSSKSQWT.

Residues 1–11 show a composition bias toward acidic residues; the sequence is MLSTAAEEDPE. Residues 1–24 are disordered; sequence MLSTAAEEDPEGGSRETNNGGETT. Residues 15–24 show a composition bias toward polar residues; that stretch reads RETNNGGETT. 7 helical membrane passes run 31–51, 112–132, 143–163, 166–186, 196–216, 221–241, and 269–289; these read SWII…VMYY, WLHA…YIGV, VGTI…LFLE, ISVG…SELL, GVAI…GTLP, FAHI…LIHP, and LCIV…VILF. Ser-171 (nucleophile) is an active-site residue. His-223 (charge relay system) is an active-site residue.

Belongs to the peptidase S54 family.

Its subcellular location is the membrane. It carries out the reaction Cleaves type-1 transmembrane domains using a catalytic dyad composed of serine and histidine that are contributed by different transmembrane domains.. Functionally, probable rhomboid-type serine protease that catalyzes intramembrane proteolysis. May function in embryo development. In Arabidopsis thaliana (Mouse-ear cress), this protein is RHOMBOID-like protein 7.